A 1597-amino-acid chain; its full sequence is Collagen alpha-1(XVII) chain (1597 aa).

Disordered regions lie at residues 1–155 (MDVT…PSTR) and 168–188 (GSRSASVSPTRNSSNTLPIPK). Residues 1 to 468 (MDVTKKNKRD…CGSCCSWWKW (468 aa)) lie on the Cytoplasmic side of the membrane. Residues 1-567 (MDVTKKNKRD…AEQENGNLRG (567 aa)) are nonhelical region (NC16A). Residues 9–19 (RDGSEVTERII) are compositionally biased toward basic and acidic residues. 3 stretches are compositionally biased toward polar residues: residues 58 to 96 (THGSSGYINSSGSTRGNASTSSYRRAHSPASTLPNSPGS), 111 to 120 (EGSSSGNSSP), and 170 to 184 (RSASVSPTRNSSNTL). Residues 146 to 231 (RLQSASPSTR…WSSTLPAGSS (86 aa)) form a necessary for interaction with DST and for the recruitment of DST to hemidesmosome region. The helical; Signal-anchor for type II membrane protein transmembrane segment at 469–489 (LLGLLLTWLLLLGLLFGLIAL) threads the bilayer. The Extracellular portion of the chain corresponds to 490-1597 (AEEVRALKAR…KGGSWRLTSY (1108 aa)). Disordered stretches follow at residues 562-857 (NGNL…SSSS), 907-927 (LRGPPGPPGPPGPPDLPFRVR), 970-1041 (LETY…ISSS), 1289-1316 (TAGVSSIPGPPGPPGPPGPRGPPGVSGA), and 1344-1394 (FIVG…SSMG). The tract at residues 568-1572 (SPGPKGDMGS…ELPLEEQPLA (1005 aa)) is triple-helical region. Residues 604-632 (PKGQKGSVGEPGMEGPMGQRGREGPMGPR) show a composition bias toward low complexity. A compositionally biased stretch (gly residues) spans 665–674 (GPKGSGGSPG). Low complexity-rich tracts occupy residues 730 to 748 (PGAVGEPGAKGAVGPAGPD) and 774 to 796 (DPGKPGFTGPQGPQGLPGTPGRP). The segment covering 820 to 838 (PGPPGPPGAMGPPGPPGAP) has biased composition (pro residues). Low complexity predominate over residues 847–857 (AGESFMGSSSS). Pro residues-rich tracts occupy residues 910–922 (PPGPPGPPGPPDL), 977–986 (PPGPPGPPGP), 1023–1035 (PGPPGPPGPPGPP), 1296–1310 (PGPPGPPGPPGPRGP), and 1348–1357 (PPGPPGPQGP). Low complexity predominate over residues 1377 to 1393 (SSHSASVSRGSSYSSSM). N-linked (GlcNAc...) asparagine glycosylation occurs at Asn-1493. The segment at 1531–1566 (GHPALEGTREKKETKVTKSMRGGEREASPSSHELPL) is disordered. Positions 1537–1557 (GTREKKETKVTKSMRGGEREA) are enriched in basic and acidic residues. The tract at residues 1573–1597 (SVLAMAYGVHVKISPKGGSWRLTSY) is nonhelical region (NC1).

Homotrimers of alpha 1(XVII)chains. Interacts (via cytoplasmic region) with ITGB4 (via cytoplasmic region). Interacts (via cytoplasmic region) with DST (via N-terminus). Interacts (via N-terminus) with PLEC. Interacts (via cytoplasmic region) with DSP. In terms of processing, the intracellular/endo domain is disulfide-linked. Post-translationally, prolines at the third position of the tripeptide repeating unit (G-X-Y) are hydroxylated in some or all of the chains. The ectodomain is shedded from the surface of keratinocytes resulting in a 120-kDa soluble form, also named as 120 kDa linear IgA disease antigen homolog. The shedding is mediated by membrane-bound metalloproteases. In terms of tissue distribution, upper lamina lucidalhemidesmosome.

It is found in the cell junction. It localises to the hemidesmosome. Its subcellular location is the membrane. The protein localises to the secreted. The protein resides in the extracellular space. It is found in the extracellular matrix. It localises to the basement membrane. Its function is as follows. The 120 kDa linear IgA disease antigen homolog is an anchoring filament component involved in dermal-epidermal cohesion. This chain is Collagen alpha-1(XVII) chain (COL17A1), found in Canis lupus familiaris (Dog).